A 637-amino-acid polypeptide reads, in one-letter code: Probable potassium transport system protein Kup (637 aa).

Transmembrane regions (helical) follow at residues 25-45 (ISLA…LYAI), 62-82 (VLGV…LKYL), 115-135 (WFLV…GMIT), 149-169 (IIAP…LTGL), 180-200 (VGAL…VLGL), 227-247 (LQGF…EALY), 263-283 (ILFV…LLLF), 295-315 (LVPS…TIIA), 352-372 (IYVP…VIGF), 378-398 (LAAA…ILFY), 410-430 (LATN…FGAS), and 434-454 (LFHG…LMLT).

It belongs to the HAK/KUP transporter (TC 2.A.72) family.

The protein resides in the cell inner membrane. It catalyses the reaction K(+)(in) + H(+)(in) = K(+)(out) + H(+)(out). Functionally, transport of potassium into the cell. Likely operates as a K(+):H(+) symporter. The sequence is that of Probable potassium transport system protein Kup from Chlorobium phaeobacteroides (strain DSM 266 / SMG 266 / 2430).